The primary structure comprises 210 residues: Glutathione S-transferase P (210 aa).

Residues 2–81 (PPYTIVYFPV…HLGRSLGLYG (80 aa)) enclose the GST N-terminal domain. Tyr4 carries the phosphotyrosine; by EGFR modification. Glutathione-binding positions include Tyr8, Arg14, Trp39, Lys45, and 52 to 53 (QL). Thr62 bears the Phosphothreonine mark. Position 65-66 (65-66 (QS)) interacts with glutathione. The GST C-terminal domain occupies 83-204 (DQKEAALVDM…SSPDHLNRPI (122 aa)). N6-succinyllysine occurs at positions 103 and 116. N6-acetyllysine is present on Lys128.

It belongs to the GST superfamily. Pi family. Homodimer. Interacts with CDK5. Present in kidney, lung, testis and placenta, very low levels in liver.

The protein resides in the cytoplasm. It localises to the mitochondrion. Its subcellular location is the nucleus. It carries out the reaction RX + glutathione = an S-substituted glutathione + a halide anion + H(+). It catalyses the reaction prostaglandin J2 + glutathione = prostaglandin J2-S-(R)-glutathione. The catalysed reaction is prostaglandin J2 + glutathione = prostaglandin J2-S-(S)-glutathione. The enzyme catalyses prostaglandin A2 + glutathione = prostaglandin A2-S-(S)-glutathione. It carries out the reaction 11(S)-hydroxy-14(S),15(S)-epoxy-(5Z,8Z,12E)-eicosatrienoate + glutathione = (11S,15S)-dihydroxy-14(R)-S-glutathionyl-(5Z,8Z,12E)-eicosatrienoate. In terms of biological role, conjugation of reduced glutathione to a wide number of exogenous and endogenous hydrophobic electrophiles. Involved in the formation of glutathione conjugates of both prostaglandin A2 (PGA2) and prostaglandin J2 (PGJ2). Participates in the formation of novel hepoxilin regioisomers. Negatively regulates CDK5 activity via p25/p35 translocation to prevent neurodegeneration. This Rattus norvegicus (Rat) protein is Glutathione S-transferase P.